Consider the following 187-residue polypeptide: Troponin I, slow skeletal muscle (187 aa).

N-acetylproline is present on P2. The segment at 2–48 (PEVERKSKITASRKLMLKSLMLAKAKECWEQEHEEREAEKVRYLSER) is involved in binding TNC. S58 bears the Phosphoserine mark. The segment at 97–118 (LKLKVLDLRGKFKRPPLRRVRV) is involved in binding TNC and actin.

It belongs to the troponin I family. In terms of assembly, binds to actin and tropomyosin.

Functionally, troponin I is the inhibitory subunit of troponin, the thin filament regulatory complex which confers calcium-sensitivity to striated muscle actomyosin ATPase activity. This Rattus norvegicus (Rat) protein is Troponin I, slow skeletal muscle (Tnni1).